The chain runs to 311 residues: MPRTADDSWDIATSVGATAVMVALARAAETASETPLIRDQFAEPLVSTPELAAVREQVAAWWAQTDDDDDPDFTVDSQQMTDYLAVRTHFFDSYFIDAVAAGIRQVVILAAGLDSRAYRLDWPGGTMVYEIDLPKVLDYKEHTLARHGAAPVAALRAVPVDLRHDWPQALRDAGFQTSLPTAWLAEGLLPFLPAAAQHALFTAIDANSATGSRVAVEMFGVDEDARRAAEERAQRWARQRAKRQARGQDTSFDPFDLWFDDEGQPDPADWFAAHGWTTDSVQVGAEALRLGRTATSQEGPFVNRFVTAGKP.

Residues Asp132 and 161–162 (DL) each bind S-adenosyl-L-methionine.

Belongs to the UPF0677 family.

Its function is as follows. Exhibits S-adenosyl-L-methionine-dependent methyltransferase activity. The sequence is that of Putative S-adenosyl-L-methionine-dependent methyltransferase MUL_4761 from Mycobacterium ulcerans (strain Agy99).